A 246-amino-acid chain; its full sequence is Small ribosomal subunit protein uS2 (246 aa).

The protein belongs to the universal ribosomal protein uS2 family.

The sequence is that of Small ribosomal subunit protein uS2 from Exiguobacterium sp. (strain ATCC BAA-1283 / AT1b).